Here is a 148-residue protein sequence, read N- to C-terminus: Ubiquitin-conjugating enzyme E2 4 (148 aa).

Positions 1-22 (MSSSKRIAKELSDLERDPPTSC) are disordered. Residues 2–148 (SSSKRIAKEL…AREWTKKYAV (147 aa)) enclose the UBC core domain. Residues 7-18 (IAKELSDLERDP) are compositionally biased toward basic and acidic residues. Position 12 is a phosphoserine (Ser-12). The Glycyl thioester intermediate role is filled by Cys-86. A Glycyl lysine isopeptide (Lys-Gly) (interchain with G-Cter in ubiquitin) cross-link involves residue Lys-91.

It belongs to the ubiquitin-conjugating enzyme family. Interacts with TUL1. In terms of processing, the N-terminus is blocked.

The enzyme catalyses S-ubiquitinyl-[E1 ubiquitin-activating enzyme]-L-cysteine + [E2 ubiquitin-conjugating enzyme]-L-cysteine = [E1 ubiquitin-activating enzyme]-L-cysteine + S-ubiquitinyl-[E2 ubiquitin-conjugating enzyme]-L-cysteine.. It participates in protein modification; protein ubiquitination. E2 ubiquitin-conjugating enzyme that catalyzes the covalent attachment of ubiquitin to other proteins. Mediates the selective degradation of short-lived and abnormal proteins. Mediates ubiquitination of PEX5. This chain is Ubiquitin-conjugating enzyme E2 4, found in Saccharomyces cerevisiae (strain ATCC 204508 / S288c) (Baker's yeast).